The chain runs to 212 residues: Ribonuclease HII (212 aa).

The region spanning 1-205 is the RNase H type-2 domain; that stretch reads MTICGVDEAG…VQDILDRASQ (205 aa). The a divalent metal cation site is built by Asp-7, Glu-8, and Asp-100.

This sequence belongs to the RNase HII family. Mn(2+) serves as cofactor. Mg(2+) is required as a cofactor.

The protein resides in the cytoplasm. The catalysed reaction is Endonucleolytic cleavage to 5'-phosphomonoester.. Its function is as follows. Endonuclease that specifically degrades the RNA of RNA-DNA hybrids. The polypeptide is Ribonuclease HII (Methanocorpusculum labreanum (strain ATCC 43576 / DSM 4855 / Z)).